The following is a 548-amino-acid chain: MDSQRNLLVIALLFVSFMIWQAWEQDKNPQPQTQQTTQTTTTAAGSAADQGVPASGQGKMITVKTDVLDLTINTRGGDVEQALLPAYPKELGSNEPFQLLETTPQFIYQAQSGLTGRDGPDNPANGPRPLYNVEKDAFVLADGQNELQVPMTYTDAAGNTFTKTFVFKRGDYAVNVNYSVQNTGEKPLEVSTFGQLKQSVNLPPHRDTGSSNFALHTFRGAAYSTPDEKYEKYKFDTIADNENLNVSSKGGWVAMLQQYFATAWIPRNDGTNNFYTANLGNGIVAIGYKAQPVLVQPGQTGAMTSTLWVGPEIQDKMAAVAPHLDLTVDYGWLWFISQPLFKLLKWIHSFVGNWGFSIIIITFIVRGIMYPLTKAQYTSMAKMRMLQPKIQAMRERLGDDKQRQSQEMMALYKAEKVNPLGGCFPLIIQMPIFLALYYMLMGSIELRHAPFALWIHDLSAQDPYYILPILMGVTMFFIQKMSPTTVTDPMQQKIMTFMPVIFTVFFLWFPSGLVLYYIVSNLVTIIQQQLIYRGLEKRGLHSREKKKS.

The helical transmembrane segment at 6 to 26 (NLLVIALLFVSFMIWQAWEQD) threads the bilayer. Residues 28–56 (NPQPQTQQTTQTTTTAAGSAADQGVPASG) form a disordered region. The span at 29–42 (PQPQTQQTTQTTTT) shows a compositional bias: low complexity. Transmembrane regions (helical) follow at residues 350-370 (FVGNWGFSIIIITFIVRGIMY), 424-444 (FPLIIQMPIFLALYYMLMGSI), 458-478 (LSAQDPYYILPILMGVTMFFI), and 499-519 (PVIFTVFFLWFPSGLVLYYIV).

Belongs to the OXA1/ALB3/YidC family. Type 1 subfamily. Interacts with the Sec translocase complex via SecD. Specifically interacts with transmembrane segments of nascent integral membrane proteins during membrane integration.

The protein localises to the cell inner membrane. Its function is as follows. Required for the insertion and/or proper folding and/or complex formation of integral membrane proteins into the membrane. Involved in integration of membrane proteins that insert both dependently and independently of the Sec translocase complex, as well as at least some lipoproteins. Aids folding of multispanning membrane proteins. This Salmonella agona (strain SL483) protein is Membrane protein insertase YidC.